Consider the following 310-residue polypeptide: ADP-L-glycero-D-manno-heptose-6-epimerase (310 aa).

NADP(+)-binding positions include 10–11 (FI), 31–32 (DN), Lys38, Lys53, 75–79 (EGACS), and Asn92. The active-site Proton acceptor is Tyr140. An NADP(+)-binding site is contributed by Lys144. Residue Asn169 coordinates substrate. Val170 and Lys178 together coordinate NADP(+). The Proton acceptor role is filled by Lys178. Substrate is bound by residues Ser180, His187, 201-204 (FEGS), and Arg209. N6-acetyllysine is present on Lys267. Residue Tyr272 coordinates substrate.

This sequence belongs to the NAD(P)-dependent epimerase/dehydratase family. HldD subfamily. In terms of assembly, homopentamer. It depends on NADP(+) as a cofactor.

The catalysed reaction is ADP-D-glycero-beta-D-manno-heptose = ADP-L-glycero-beta-D-manno-heptose. It participates in nucleotide-sugar biosynthesis; ADP-L-glycero-beta-D-manno-heptose biosynthesis; ADP-L-glycero-beta-D-manno-heptose from D-glycero-beta-D-manno-heptose 7-phosphate: step 4/4. Catalyzes the interconversion between ADP-D-glycero-beta-D-manno-heptose and ADP-L-glycero-beta-D-manno-heptose via an epimerization at carbon 6 of the heptose. This is ADP-L-glycero-D-manno-heptose-6-epimerase from Shigella boydii serotype 18 (strain CDC 3083-94 / BS512).